Consider the following 88-residue polypeptide: CRISPR-associated endoribonuclease Cas2 2 (88 aa).

D8 contacts Mg(2+).

The protein belongs to the CRISPR-associated endoribonuclease Cas2 protein family. In terms of assembly, homodimer, forms a heterotetramer with a Cas1 homodimer. It depends on Mg(2+) as a cofactor.

Functionally, CRISPR (clustered regularly interspaced short palindromic repeat), is an adaptive immune system that provides protection against mobile genetic elements (viruses, transposable elements and conjugative plasmids). CRISPR clusters contain sequences complementary to antecedent mobile elements and target invading nucleic acids. CRISPR clusters are transcribed and processed into CRISPR RNA (crRNA). Functions as a ssRNA-specific endoribonuclease. Involved in the integration of spacer DNA into the CRISPR cassette. The polypeptide is CRISPR-associated endoribonuclease Cas2 2 (cas22) (Saccharolobus solfataricus (strain ATCC 35092 / DSM 1617 / JCM 11322 / P2) (Sulfolobus solfataricus)).